The following is a 22-amino-acid chain: Antimicrobial peptide 5 (22 aa).

Leu-22 is modified (leucine amide).

Skin.

It is found in the secreted. In terms of biological role, has very strong antimicrobial activity against Gram-positive bacterium S.aureus, Gram-negative bacterium E.coli and yeast C.albicans. Has strong hemolytic activity against human red blood cells. The chain is Antimicrobial peptide 5 from Xenopus tropicalis (Western clawed frog).